Here is a 261-residue protein sequence, read N- to C-terminus: NAD kinase (261 aa).

Asp54 functions as the Proton acceptor in the catalytic mechanism. NAD(+)-binding positions include 54 to 55 (DG), 123 to 124 (ND), Arg150, Asp152, and 163 to 168 (TAYSLS).

It belongs to the NAD kinase family. Requires a divalent metal cation as cofactor.

It localises to the cytoplasm. It catalyses the reaction NAD(+) + ATP = ADP + NADP(+) + H(+). Involved in the regulation of the intracellular balance of NAD and NADP, and is a key enzyme in the biosynthesis of NADP. Catalyzes specifically the phosphorylation on 2'-hydroxyl of the adenosine moiety of NAD to yield NADP. This is NAD kinase from Caldicellulosiruptor bescii (strain ATCC BAA-1888 / DSM 6725 / KCTC 15123 / Z-1320) (Anaerocellum thermophilum).